The chain runs to 119 residues: Large ribosomal subunit protein bL20 (119 aa).

Belongs to the bacterial ribosomal protein bL20 family.

Binds directly to 23S ribosomal RNA and is necessary for the in vitro assembly process of the 50S ribosomal subunit. It is not involved in the protein synthesizing functions of that subunit. This is Large ribosomal subunit protein bL20 from Bordetella avium (strain 197N).